The chain runs to 164 residues: Polygalacturonase (164 aa).

The protein belongs to the glycosyl hydrolase 28 family.

It localises to the secreted. Its subcellular location is the cell wall. It carries out the reaction (1,4-alpha-D-galacturonosyl)n+m + H2O = (1,4-alpha-D-galacturonosyl)n + (1,4-alpha-D-galacturonosyl)m.. In Cupressus sempervirens (Italian cypress), this protein is Polygalacturonase.